The chain runs to 201 residues: Ras-related protein Rab-9B (201 aa).

The GTP site is built by Val18, Gly19, Lys20, Ser21, Ser22, Asp33, Ser34, Ala36, His38, and Thr39. Position 21 (Ser21) interacts with Mg(2+). Positions 31–42 (KFDSQAFHTIGV) match the Switch 1 motif. Ser34 is modified (phosphoserine). Mg(2+) is bound by residues Thr39 and Asp62. The Switch 2 motif lies at 64-78 (AGQERFKSLRTPFYR). GTP is bound by residues Gly65, Asn124, Lys125, Ala155, and Lys156. 2 S-geranylgeranyl cysteine lipidation sites follow: Cys200 and Cys201.

It belongs to the small GTPase superfamily. Rab family. Interacts (GTP-bound form) with SGSM1; the GDP-bound form has much lower affinity for SGSM1. The GTP-bound form but not the GDP-bound form interacts with HPS4 and the BLOC-3 complex (heterodimer of HPS1 and HPS4) but does not interact with HPS1 alone. Interacts (GTP-bound form) with NDE1. It depends on Mg(2+) as a cofactor.

Its subcellular location is the cell membrane. The protein localises to the cytoplasmic vesicle. It localises to the phagosome membrane. The catalysed reaction is GTP + H2O = GDP + phosphate + H(+). Its activity is regulated as follows. Regulated by guanine nucleotide exchange factors (GEFs) which promote the exchange of bound GDP for free GTP. Regulated by GTPase activating proteins (GAPs) which increase the GTP hydrolysis activity. Inhibited by GDP dissociation inhibitors (GDIs). Its function is as follows. The small GTPases Rab are key regulators of intracellular membrane trafficking, from the formation of transport vesicles to their fusion with membranes. Rabs cycle between an inactive GDP-bound form and an active GTP-bound form that is able to recruit to membranes different sets of downstream effectors directly responsible for vesicle formation, movement, tethering and fusion. RAB9B is involved in the transport of proteins between the endosomes and the trans Golgi network. May use NDE1/NDEL1 as an effector to interact with the dynein motor complex in order to control retrograde trafficking of RAB9-associated late endosomes to the TGN. This Mus musculus (Mouse) protein is Ras-related protein Rab-9B.